Consider the following 494-residue polypeptide: MQRWLQLWKMDLVQKVSHGVFEGSSEEPAALMNHDYIVLGEVYPERDEESGAEQCEQDCRYRGEAVSDGFLSSLFGREISSYTKEFLLDVQSRVNFTYRTRFVPIARAPDGPSPLSLNLLVRTNPISTIEDYIANPDCFNTDIGWGCMIRTGQSLLGNALQILHLGRDFRVNGNESLERESKFVNWFNDTPEAPFSLHNFVSAGTELSDKRPGEWFGPAATARSIQSLIYGFPECGIDDCIVSVSSGDIYENEVEKVFAENPNSRILFLLGVKLGINAVNESYRESICGILSSTQSVGIAGGRPSSSLYFFGYQGNEFLHFDPHIPQPAVEDSFVESCHTSKFGKLQLSEMDPSMLIGILIKGEKDWQQWKLEVAESAIINVLAKRMDDFDVSCSMDDVESVSSNSMKKDASNNENLGVLEGDYVDIGAIFPHTTNTEDVDEYDCFQDIHCKKQKIVVMGNTHTVNANLTDYEVEGVLVEKETVGIHSPIDEKC.

An APEAR motif is present at residues 102-105 (FVPI). Cysteine 147 functions as the Nucleophile in the catalytic mechanism. A Phosphoserine modification is found at serine 307. Residues aspartate 322 and histidine 324 contribute to the active site. Cysteine 338 and cysteine 394 are oxidised to a cystine. The LIR signature appears at 424 to 427 (YVDI). At serine 488 the chain carries Phosphoserine.

The protein belongs to the peptidase C54 family. In terms of assembly, interacts with ATG8. Interacts with TUB1 and TUB2. Phosphorylation at Ser-307 by ATG1 inhibits autophagy: it takes place on autophagosome membranes and decreases its interaction with ATG8, thereby impairing deconjugation of PE-conjugated forms of ATG8. Post-translationally, formation of a disulfide bond between Cys-338 and Cys-394 leads to reduced autophagy. The disulfide bond is reduced by thioredoxin.

The protein localises to the cytoplasm. Its subcellular location is the nucleus. It localises to the preautophagosomal structure. It catalyses the reaction [protein]-C-terminal L-amino acid-glycyl-phosphatidylethanolamide + H2O = [protein]-C-terminal L-amino acid-glycine + a 1,2-diacyl-sn-glycero-3-phosphoethanolamine. Functionally, cysteine protease that plays a key role in cytoplasm to vacuole transport (Cvt) and autophagy by mediating both proteolytic activation and delipidation of ATG8. Required for selective autophagic degradation of the nucleus (nucleophagy) as well as for mitophagy which contributes to regulate mitochondrial quantity and quality by eliminating the mitochondria to a basal level to fulfill cellular energy requirements and preventing excess ROS production. The protease activity is required for proteolytic activation of ATG8: cleaves the C-terminal amino acid of ATG8 to reveal a C-terminal glycine. ATG8 ubiquitin-like activity requires the exposure of the glycine at the C-terminus for its conjugation to phosphatidylethanolamine (PE) and its insertion to membranes, which is necessary for autophagy. The ATG8-PE conjugate mediates tethering between adjacent membranes and stimulates membrane hemifusion, leading to expansion of the autophagosomal membrane during autophagy. In addition to the protease activity, also catalyzes deconjugation of PE-conjugated forms of ATG8 during macroautophagy: ATG8 delipidation is required to release the protein from membranes, which facilitates multiple events during macroautophagy, and especially for efficient autophagosome biogenesis, the assembly of ATG9-containing tubulovesicular clusters into phagophores/autophagosomes, and for the disassembly of PAS-associated ATG components. ATG8 delipidation by ATG4 also recycles ATG8-PE generated on inappropriate membranes to maintain a reservoir of unlipidated ATG8 that is required for autophagosome formation at the PAS. The chain is Cysteine protease ATG4 (ATG4) from Saccharomyces cerevisiae (strain YJM789) (Baker's yeast).